A 98-amino-acid polypeptide reads, in one-letter code: NADH-ubiquinone oxidoreductase chain 4L (98 aa).

The next 3 membrane-spanning stretches (helical) occupy residues 1–21, 28–48, and 59–79; these read MAPI…GVLI, STLL…TLLI, and APLI…ALLV.

This sequence belongs to the complex I subunit 4L family. As to quaternary structure, core subunit of respiratory chain NADH dehydrogenase (Complex I) which is composed of 45 different subunits.

The protein resides in the mitochondrion inner membrane. It catalyses the reaction a ubiquinone + NADH + 5 H(+)(in) = a ubiquinol + NAD(+) + 4 H(+)(out). In terms of biological role, core subunit of the mitochondrial membrane respiratory chain NADH dehydrogenase (Complex I) which catalyzes electron transfer from NADH through the respiratory chain, using ubiquinone as an electron acceptor. Part of the enzyme membrane arm which is embedded in the lipid bilayer and involved in proton translocation. This is NADH-ubiquinone oxidoreductase chain 4L (MT-ND4L) from Isoodon macrourus (Short-nosed bandicoot).